Reading from the N-terminus, the 477-residue chain is Sucrose-6-phosphate hydrolase (477 aa).

Substrate contacts are provided by residues 36–39 (WMND), Gln55, Trp63, 98–99 (FS), 160–161 (RD), Glu215, and Trp298. Residue Asp39 is part of the active site.

This sequence belongs to the glycosyl hydrolase 32 family.

The protein resides in the cytoplasm. It carries out the reaction Hydrolysis of terminal non-reducing beta-D-fructofuranoside residues in beta-D-fructofuranosides.. The protein operates within glycan biosynthesis; sucrose metabolism. Enables the bacterium to metabolize sucrose as a sole carbon source. The protein is Sucrose-6-phosphate hydrolase (cscA) of Escherichia coli.